A 344-amino-acid chain; its full sequence is DNA-directed RNA polymerase subunit alpha (344 aa).

Residues 1-238 form an alpha N-terminal domain (alpha-NTD) region; that stretch reads MKVIKTAPLI…KQLGVFGERP (238 aa). The tract at residues 253–344 is alpha C-terminal domain (alpha-CTD); the sequence is DAKDLSAKIE…EKLEDKGGND (92 aa).

It belongs to the RNA polymerase alpha chain family. As to quaternary structure, homodimer. The RNAP catalytic core consists of 2 alpha, 1 beta, 1 beta' and 1 omega subunit. When a sigma factor is associated with the core the holoenzyme is formed, which can initiate transcription.

The catalysed reaction is RNA(n) + a ribonucleoside 5'-triphosphate = RNA(n+1) + diphosphate. Its function is as follows. DNA-dependent RNA polymerase catalyzes the transcription of DNA into RNA using the four ribonucleoside triphosphates as substrates. The sequence is that of DNA-directed RNA polymerase subunit alpha from Helicobacter pylori (strain HPAG1).